The primary structure comprises 1416 residues: DNA-directed RNA polymerase subunit beta (1416 aa).

Belongs to the RNA polymerase beta chain family. As to quaternary structure, in plastids the minimal PEP RNA polymerase catalytic core is composed of four subunits: alpha, beta, beta', and beta''. When a (nuclear-encoded) sigma factor is associated with the core the holoenzyme is formed, which can initiate transcription.

It localises to the plastid. The protein localises to the chloroplast. The enzyme catalyses RNA(n) + a ribonucleoside 5'-triphosphate = RNA(n+1) + diphosphate. Its function is as follows. DNA-dependent RNA polymerase catalyzes the transcription of DNA into RNA using the four ribonucleoside triphosphates as substrates. The protein is DNA-directed RNA polymerase subunit beta of Oltmannsiellopsis viridis (Marine flagellate).